An 805-amino-acid polypeptide reads, in one-letter code: Na(+)/H(+) antiporter subunit A (805 aa).

Helical transmembrane passes span 4–22 (LHWA…PFLY), 29–51 (HTGW…YLSI), 80–102 (SLLF…IFYL), 109–128 (LNNF…GVVL), 132–154 (LIVL…SYWF), 167–189 (MLIT…VMTG), 209–231 (FLPA…PFHI), 244–266 (SAYL…LTPV), 271–293 (AEWF…TSAV), 300–322 (GILA…LGSA), 332–354 (PAFY…TFKG), 375–397 (LGGL…ASMA), 431–453 (IIIV…IMFF), 474–496 (IGML…FPNI), 529–551 (GFNA…FLMM), 597–614 (YFAY…YTMF), 629–651 (IAPY…PFIN), 656–674 (AVVV…FVVF), 679–701 (LALT…FYHL), 714–736 (NVLN…LSSL), and 778–795 (MLEV…IALI).

This sequence belongs to the CPA3 antiporters (TC 2.A.63) subunit A family. Forms a heterooligomeric complex that consists of seven subunits: MrpA, MrpB, MrpC, MrpD, MrpE, MrpF and MrpG.

It is found in the cell membrane. Mnh complex is a Na(+)Li(+)/H(+) antiporter involved in Na(+) and/or Li(+) excretion and Na(+) resistance. Na(+)/H(+) antiport consumes a transmembrane electrical potential, and is thus inferred to be electrogenic. Does not transport K(+), Ca(2+) or Mg(2+). This Alkalihalophilus pseudofirmus (strain ATCC BAA-2126 / JCM 17055 / OF4) (Bacillus pseudofirmus) protein is Na(+)/H(+) antiporter subunit A (mrpA).